A 286-amino-acid polypeptide reads, in one-letter code: Energy-coupling factor transporter ATP-binding protein EcfA2 (286 aa).

The 244-residue stretch at 3 to 246 (IRFDNVSYTY…KEKLADWHIA (244 aa)) folds into the ABC transporter domain. 40-47 (GQTGSGKS) contributes to the ATP binding site.

Belongs to the ABC transporter superfamily. Energy-coupling factor EcfA family. As to quaternary structure, forms a stable energy-coupling factor (ECF) transporter complex composed of 2 membrane-embedded substrate-binding proteins (S component), 2 ATP-binding proteins (A component) and 2 transmembrane proteins (T component).

Its subcellular location is the cell membrane. Its function is as follows. ATP-binding (A) component of a common energy-coupling factor (ECF) ABC-transporter complex. Unlike classic ABC transporters this ECF transporter provides the energy necessary to transport a number of different substrates. The sequence is that of Energy-coupling factor transporter ATP-binding protein EcfA2 from Staphylococcus aureus (strain bovine RF122 / ET3-1).